The following is a 425-amino-acid chain: Metalloprotease AF_0655 (425 aa).

This sequence belongs to the peptidase U62 family.

Probable metalloprotease. The chain is Metalloprotease AF_0655 from Archaeoglobus fulgidus (strain ATCC 49558 / DSM 4304 / JCM 9628 / NBRC 100126 / VC-16).